The chain runs to 203 residues: MHKAPESVLNALVPMVVEQTAKGERSYDIYSRLLKERVIFLVGQVEEHMANLIVAQLLFLESESPDKDIYLYINSPGGSVTAGMAIYDTMQFIKPNVSTVCIGQAASMGAFLLAGGAEGKRHCLPNSRVMIHQPLGGFQGQASDIAIHAQEILGIKNKLNTMLAEHTGQPIEVIERDTDRDNFMSADEAAEYGLVDSVLAKRG.

Residue Ser107 is the Nucleophile of the active site. The active site involves His132.

The protein belongs to the peptidase S14 family. In terms of assembly, fourteen ClpP subunits assemble into 2 heptameric rings which stack back to back to give a disk-like structure with a central cavity, resembling the structure of eukaryotic proteasomes.

It is found in the cytoplasm. It catalyses the reaction Hydrolysis of proteins to small peptides in the presence of ATP and magnesium. alpha-casein is the usual test substrate. In the absence of ATP, only oligopeptides shorter than five residues are hydrolyzed (such as succinyl-Leu-Tyr-|-NHMec, and Leu-Tyr-Leu-|-Tyr-Trp, in which cleavage of the -Tyr-|-Leu- and -Tyr-|-Trp bonds also occurs).. Cleaves peptides in various proteins in a process that requires ATP hydrolysis. Has a chymotrypsin-like activity. Plays a major role in the degradation of misfolded proteins. This is ATP-dependent Clp protease proteolytic subunit from Shewanella piezotolerans (strain WP3 / JCM 13877).